The chain runs to 199 residues: Shikimate kinase (199 aa).

An ATP-binding site is contributed by 34–39 (GAGKTA). Thr38 contacts Mg(2+). 3 residues coordinate substrate: Asp56, Arg80, and Gly102. Arg140 provides a ligand contact to ATP. Position 159 (Arg159) interacts with substrate.

The protein belongs to the shikimate kinase family. Monomer. The cofactor is Mg(2+).

Its subcellular location is the cytoplasm. The catalysed reaction is shikimate + ATP = 3-phosphoshikimate + ADP + H(+). Its pathway is metabolic intermediate biosynthesis; chorismate biosynthesis; chorismate from D-erythrose 4-phosphate and phosphoenolpyruvate: step 5/7. Its function is as follows. Catalyzes the specific phosphorylation of the 3-hydroxyl group of shikimic acid using ATP as a cosubstrate. In Cereibacter sphaeroides (strain ATCC 17023 / DSM 158 / JCM 6121 / CCUG 31486 / LMG 2827 / NBRC 12203 / NCIMB 8253 / ATH 2.4.1.) (Rhodobacter sphaeroides), this protein is Shikimate kinase.